The following is a 470-amino-acid chain: Ubiquitin carboxyl-terminal hydrolase calypso (470 aa).

The UCH catalytic domain occupies 43–274; that stretch reads GWLELESDPG…IRFNLMAVVP (232 aa). C129 functions as the Nucleophile in the catalytic mechanism. H211 functions as the Proton donor in the catalytic mechanism. The segment at 305–324 is disordered; the sequence is DEQGEGGNGDPQRPDTPSTL. A ULD domain is found at 373 to 401; sequence NYDKFICTFLSMLAHQGVLGELVSQHLLP. The segment at 403 to 470 is positively charged C-terminal tail required for binding nucleosomes; the sequence is KKISGQSAAN…KGRNKCKKRK (68 aa). Positions 422–451 are enriched in low complexity; it reads ANAGATAAGAAGAAPKSQQQQAAAAKNGKS. The disordered stretch occupies residues 422–470; it reads ANAGATAAGAAGAAPKSQQQQAAAAKNGKSPSKTPGRRRKGRNKCKKRK. A compositionally biased stretch (basic residues) spans 456 to 470; sequence PGRRRKGRNKCKKRK.

Belongs to the peptidase C12 family. BAP1 subfamily. As to quaternary structure, catalytic component of the polycomb repressive deubiquitinase (PR-DUB) complex, at least composed of caly/calypso, Asx and sba (MBD5/6 homolog). The PR-DUB complex associates with nucleosomes to mediate deubiquitination of histone H2AK118ub1 substrates; the association requires the positively charged C-terminal tail of caly, probably due to direct binding of DNA. Interacts (via ULD domain) with Asx (via DEUBAD domain); the interaction produces a stable heterodimer with a composite binding site for ubiquitin. Homodimerizes (via coiled-coil hinge-region between the UCH and ULD domains) to mediate assembly of 2 copies of the caly-Asx heterodimer into a bisymmetric tetramer; dimerization enhances PR-DUB association with nucleosomes.

It is found in the nucleus. It catalyses the reaction Thiol-dependent hydrolysis of ester, thioester, amide, peptide and isopeptide bonds formed by the C-terminal Gly of ubiquitin (a 76-residue protein attached to proteins as an intracellular targeting signal).. Catalytic component of the polycomb repressive deubiquitinase (PR-DUB) complex, a complex that specifically mediates deubiquitination of histone H2A monoubiquitinated at 'Lys-119' (H2AK118ub1). Mediates bisymmetric organization of the PR-DUB complex and is involved in association with nucleosomes to mediate deubiquitination. Does not deubiquitinate monoubiquitinated histone H2B. Required to maintain the transcriptionally repressive state of homeotic genes throughout development. The PR-DUB complex has weak or no activity toward 'Lys-48'- and 'Lys-63'-linked polyubiquitin chains. Polycomb group (PcG) protein. The sequence is that of Ubiquitin carboxyl-terminal hydrolase calypso from Drosophila ananassae (Fruit fly).